Consider the following 140-residue polypeptide: uncharacterized protein (140 aa).

14 tandem repeats follow at residues 1 to 10, 11 to 20, 21 to 30, 31 to 40, 41 to 50, 51 to 60, 61 to 70, 71 to 80, 81 to 90, 91 to 100, 101 to 110, 111 to 120, 121 to 130, and 131 to 140. A 14 X 10 AA tandem repeats of [MT]-F-[AG]-R-L-[CS]-P-V-[SI]-[ET] region spans residues 1-140; that stretch reads MFARLCPVSE…MFGRLCPVIT (140 aa).

This is an uncharacterized protein from Homo sapiens (Human).